We begin with the raw amino-acid sequence, 545 residues long: Glucose-6-phosphate isomerase (545 aa).

The active-site Proton donor is the glutamate 351. Residues histidine 382 and lysine 510 contribute to the active site.

The protein belongs to the GPI family.

The protein resides in the cytoplasm. It carries out the reaction alpha-D-glucose 6-phosphate = beta-D-fructose 6-phosphate. It participates in carbohydrate biosynthesis; gluconeogenesis. Its pathway is carbohydrate degradation; glycolysis; D-glyceraldehyde 3-phosphate and glycerone phosphate from D-glucose: step 2/4. Functionally, catalyzes the reversible isomerization of glucose-6-phosphate to fructose-6-phosphate. This chain is Glucose-6-phosphate isomerase, found in Shewanella baltica (strain OS185).